We begin with the raw amino-acid sequence, 237 residues long: Uridylate kinase (237 aa).

11–14 (KLSG) contacts ATP. Gly-53 contributes to the UMP binding site. Gly-54 and Arg-58 together coordinate ATP. Residues Asp-73 and 134 to 141 (TGNPFFTT) each bind UMP. Residues Thr-161, Tyr-167, and Asp-170 each contribute to the ATP site.

This sequence belongs to the UMP kinase family. Homohexamer.

Its subcellular location is the cytoplasm. It catalyses the reaction UMP + ATP = UDP + ADP. The protein operates within pyrimidine metabolism; CTP biosynthesis via de novo pathway; UDP from UMP (UMPK route): step 1/1. Inhibited by UTP. Functionally, catalyzes the reversible phosphorylation of UMP to UDP. In Burkholderia ambifaria (strain ATCC BAA-244 / DSM 16087 / CCUG 44356 / LMG 19182 / AMMD) (Burkholderia cepacia (strain AMMD)), this protein is Uridylate kinase.